Reading from the N-terminus, the 56-residue chain is RLSRRRVYSIGGRRRRRRRRSRGRRGRRRGRRRGRRRGRRRGRRRRRRRGGRRRRR.

The segment at 1 to 56 (RLSRRRVYSIGGRRRRRRRRSRGRRGRRRGRRRGRRRGRRRGRRRRRRRGGRRRRR) is disordered.

Post-translationally, P2 is phosphorylated in immature sperm. It is dephosphorylated in mature sperm allowing a stronger interaction with DNA. Testis.

The protein localises to the nucleus. It localises to the chromosome. In terms of biological role, protamines substitute for histones in the chromatin of sperm during the haploid phase of spermatogenesis. They compact sperm DNA into a highly condensed, stable and inactive complex. Its function is as follows. Octopus spermiogenesis is characterized by a double nuclear protein transition: Histones are first replaced by P1, which allows the chromatin to adopt a shape that is not as relaxed as with histones. The majority of P1 is later replaced by P2, forming a compact chromatin. P2 is the main protamine of sperm. This chain is Sperm protamine P1, found in Octopus vulgaris (Common octopus).